Consider the following 451-residue polypeptide: Exodeoxyribonuclease 7 large subunit (451 aa).

This sequence belongs to the XseA family. Heterooligomer composed of large and small subunits.

The protein resides in the cytoplasm. It catalyses the reaction Exonucleolytic cleavage in either 5'- to 3'- or 3'- to 5'-direction to yield nucleoside 5'-phosphates.. In terms of biological role, bidirectionally degrades single-stranded DNA into large acid-insoluble oligonucleotides, which are then degraded further into small acid-soluble oligonucleotides. The polypeptide is Exodeoxyribonuclease 7 large subunit (Neisseria meningitidis serogroup B (strain ATCC BAA-335 / MC58)).